Consider the following 496-residue polypeptide: Protein RepR (496 aa).

The DNA-binding element occupies 120–141 (SDILTTAIDLGFMPTLIIKSDK).

Essential for replication. This Streptococcus agalactiae protein is Protein RepR (repR).